A 416-amino-acid polypeptide reads, in one-letter code: Proline-serine-threonine phosphatase-interacting protein 1 (416 aa).

The 260-residue stretch at 5-264 (LQFKDAFWCR…TLEGCSIDAD (260 aa)) folds into the F-BAR domain. Residues 166-212 (HQKQVEKSQNKARQCKDSATEAERVYRQSIAQLEKVRAEWEQEHRTT) are a coiled coil. Ser-318 is modified (phosphoserine). At Tyr-345 the chain carries Phosphotyrosine. The SH3 domain maps to 359–416 (SPAQEYRALYDYTAQNPDELDLSAGDILEVILEGEDGWWTVERNGQRGFVPGSYLEKL).

In terms of assembly, homodimer. Homotrimer. Interacts (via coiled-coil domain) with CD2AP, PTPN12 and PTPN18. Interacts (via SH3 domain) with ABL1 and WAS. Interacts (via SH3 and coiled-coil domains) with MEFV (via B-box zinc finger); the interaction allows binding of MEFV to PYCARD and facilitates formation of PYCARD pyroptosomes. Interacts with CD2, DNM2 and FASLG. Post-translationally, dephosphorylated on Tyr-345 by PTPN18, this event negatively regulates the association of PSTPIP1 with SH2 domain-containing proteins as tyrosine kinase. Phosphorylation of Tyr-345 is probably required for subsequent phosphorylation at other tyrosine residues. Phosphorylation is induced by activation of the EGFR and PDGFR in a ABL1 dependent manner. The phosphorylation regulates the interaction with WAS and with MEFV. Highly expressed in the peripheral blood leukocytes, granulocytes and monocytes, namely in T-cells and natural killer cells, and in spleen. Weakly expressed in the thymus, small intestine, lung and placenta.

It is found in the cytoplasm. Its subcellular location is the cell membrane. It localises to the cell projection. The protein localises to the uropodium. The protein resides in the cytoskeleton. It is found in the perinuclear region. Its subcellular location is the lamellipodium. It localises to the cleavage furrow. Functionally, involved in regulation of the actin cytoskeleton. May regulate WAS actin-bundling activity. Bridges the interaction between ABL1 and PTPN18 leading to ABL1 dephosphorylation. May play a role as a scaffold protein between PTPN12 and WAS and allow PTPN12 to dephosphorylate WAS. Has the potential to physically couple CD2 and CD2AP to WAS. Acts downstream of CD2 and CD2AP to recruit WAS to the T-cell:APC contact site so as to promote the actin polymerization required for synapse induction during T-cell activation. Down-regulates CD2-stimulated adhesion through the coupling of PTPN12 to CD2. Also has a role in innate immunity and the inflammatory response. Recruited to inflammasomes by MEFV. Induces formation of pyroptosomes, large supramolecular structures composed of oligomerized PYCARD dimers which form prior to inflammatory apoptosis. Binding to MEFV allows MEFV to bind to PYCARD and facilitates pyroptosome formation. Regulates endocytosis and cell migration in neutrophils. The chain is Proline-serine-threonine phosphatase-interacting protein 1 (PSTPIP1) from Homo sapiens (Human).